Consider the following 567-residue polypeptide: Oxygen-dependent choline dehydrogenase (567 aa).

6–35 (DYIIVGAGSAGNTLATRLTEDEGVTVLLLE) lines the FAD pocket. Positions 182–203 (QQEGFGPMDRTVTPKGRRASTA) are disordered. Catalysis depends on His-475, which acts as the Proton acceptor.

Belongs to the GMC oxidoreductase family. FAD is required as a cofactor.

The enzyme catalyses choline + A = betaine aldehyde + AH2. The catalysed reaction is betaine aldehyde + NAD(+) + H2O = glycine betaine + NADH + 2 H(+). It participates in amine and polyamine biosynthesis; betaine biosynthesis via choline pathway; betaine aldehyde from choline (cytochrome c reductase route): step 1/1. Involved in the biosynthesis of the osmoprotectant glycine betaine. Catalyzes the oxidation of choline to betaine aldehyde and betaine aldehyde to glycine betaine at the same rate. This Pseudomonas fluorescens (strain ATCC BAA-477 / NRRL B-23932 / Pf-5) protein is Oxygen-dependent choline dehydrogenase.